The primary structure comprises 241 residues: ATP synthase subunit a (241 aa).

Helical transmembrane passes span 30–50 (GQVF…VLVG), 89–109 (LPFI…GALI), 128–148 (INTT…AGLS), 193–213 (LAVG…VMLL), and 214–234 (GLFT…FYIG).

The protein belongs to the ATPase A chain family. As to quaternary structure, F-type ATPases have 2 components, CF(1) - the catalytic core - and CF(0) - the membrane proton channel. CF(1) has five subunits: alpha(3), beta(3), gamma(1), delta(1), epsilon(1). CF(0) has four main subunits: a, b, b' and c.

Its subcellular location is the cellular thylakoid membrane. Key component of the proton channel; it plays a direct role in the translocation of protons across the membrane. In Synechococcus sp. (strain CC9605), this protein is ATP synthase subunit a.